A 141-amino-acid chain; its full sequence is MKAFLVICALTLTAVATQARTMDRCSLAREMSKLGVPRDQLAKWTCIAQHESSFRTGVVGPANSNGSNDYGIFQINNKYWCKPADGRFSYNECGLSCNALLTDDITNSVKCARKIQRQQGWTAWSTWKYCSGSLPSINSCF.

Positions 1–18 (MKAFLVICALTLTAVATQ) are cleaved as a signal peptide. Residues 20–141 (RTMDRCSLAR…GSLPSINSCF (122 aa)) form the C-type lysozyme domain. Disulfide bonds link Cys-25-Cys-140, Cys-46-Cys-130, Cys-81-Cys-97, and Cys-93-Cys-111. Residues Glu-51 and Asp-69 contribute to the active site.

Belongs to the glycosyl hydrolase 22 family. Salivary gland.

It carries out the reaction Hydrolysis of (1-&gt;4)-beta-linkages between N-acetylmuramic acid and N-acetyl-D-glucosamine residues in a peptidoglycan and between N-acetyl-D-glucosamine residues in chitodextrins.. In terms of biological role, unlikely to play an active role in the humoral immune defense. May have a function in the digestion of bacteria in the food. The sequence is that of Lysozyme P (LysP) from Drosophila melanogaster (Fruit fly).